A 508-amino-acid polypeptide reads, in one-letter code: uncharacterized protein (508 aa).

It is found in the virion. This is an uncharacterized protein from Acanthamoeba polyphaga mimivirus (APMV).